The chain runs to 332 residues: L-lactate dehydrogenase A chain (332 aa).

NAD(+) is bound by residues 29–57 (GAVG…IEDK) and arginine 99. Positions 106, 138, and 169 each coordinate substrate. Residue asparagine 138 coordinates NAD(+). Histidine 193 (proton acceptor) is an active-site residue. Threonine 248 serves as a coordination point for substrate.

It belongs to the LDH/MDH superfamily. LDH family. Homotetramer.

Its subcellular location is the cytoplasm. The catalysed reaction is (S)-lactate + NAD(+) = pyruvate + NADH + H(+). It functions in the pathway fermentation; pyruvate fermentation to lactate; (S)-lactate from pyruvate: step 1/1. In terms of biological role, interconverts simultaneously and stereospecifically pyruvate and lactate with concomitant interconversion of NADH and NAD(+). This is L-lactate dehydrogenase A chain (LDHA) from Pelodiscus sinensis japonicus (Chinese soft-shelled turtle).